Reading from the N-terminus, the 292-residue chain is Lipoyl synthase (292 aa).

[4Fe-4S] cluster-binding residues include cysteine 38, cysteine 43, cysteine 49, cysteine 64, cysteine 68, cysteine 71, and serine 277. Residues 50–266 (WSKGTATFLL…REIALDAGFR (217 aa)) form the Radical SAM core domain.

It belongs to the radical SAM superfamily. Lipoyl synthase family. [4Fe-4S] cluster serves as cofactor.

The protein localises to the cytoplasm. The enzyme catalyses [[Fe-S] cluster scaffold protein carrying a second [4Fe-4S](2+) cluster] + N(6)-octanoyl-L-lysyl-[protein] + 2 oxidized [2Fe-2S]-[ferredoxin] + 2 S-adenosyl-L-methionine + 4 H(+) = [[Fe-S] cluster scaffold protein] + N(6)-[(R)-dihydrolipoyl]-L-lysyl-[protein] + 4 Fe(3+) + 2 hydrogen sulfide + 2 5'-deoxyadenosine + 2 L-methionine + 2 reduced [2Fe-2S]-[ferredoxin]. Its pathway is protein modification; protein lipoylation via endogenous pathway; protein N(6)-(lipoyl)lysine from octanoyl-[acyl-carrier-protein]: step 2/2. In terms of biological role, catalyzes the radical-mediated insertion of two sulfur atoms into the C-6 and C-8 positions of the octanoyl moiety bound to the lipoyl domains of lipoate-dependent enzymes, thereby converting the octanoylated domains into lipoylated derivatives. The protein is Lipoyl synthase of Chlorobaculum parvum (strain DSM 263 / NCIMB 8327) (Chlorobium vibrioforme subsp. thiosulfatophilum).